The following is a 296-amino-acid chain: Ribonuclease HIII (296 aa).

An RNase H type-2 domain is found at 80–296; sequence LALIGSDEVG…NTKKAYQRLK (217 aa). A divalent metal cation-binding residues include Asp-86, Glu-87, and Asp-191.

It belongs to the RNase HII family. RnhC subfamily. Requires Mn(2+) as cofactor. The cofactor is Mg(2+).

The protein resides in the cytoplasm. The enzyme catalyses Endonucleolytic cleavage to 5'-phosphomonoester.. In terms of biological role, endonuclease that specifically degrades the RNA of RNA-DNA hybrids. This is Ribonuclease HIII from Streptococcus thermophilus (strain ATCC BAA-491 / LMD-9).